Consider the following 276-residue polypeptide: Omega-amidase NIT2-B (276 aa).

Residues 4–248 (FRLSLVQFLV…ETVISADIDL (245 aa)) enclose the CN hydrolase domain. Glu-43 serves as the catalytic Proton acceptor. Lys-112 serves as the catalytic Proton donor. Residue Cys-153 is the Nucleophile of the active site.

Belongs to the carbon-nitrogen hydrolase superfamily. NIT1/NIT2 family. In terms of assembly, homodimer.

Its subcellular location is the cytoplasm. It catalyses the reaction 2-oxoglutaramate + H2O = 2-oxoglutarate + NH4(+). The enzyme catalyses 2-oxosuccinamate + H2O = oxaloacetate + NH4(+). Its function is as follows. Has omega-amidase activity. The role of omega-amidase is to remove potentially toxic intermediates by converting 2-oxoglutaramate and 2-oxosuccinamate to biologically useful 2-oxoglutarate and oxaloacetate, respectively. The protein is Omega-amidase NIT2-B (nit2b) of Xenopus laevis (African clawed frog).